The primary structure comprises 328 residues: Phosphate acyltransferase (328 aa).

This sequence belongs to the PlsX family. As to quaternary structure, homodimer. Probably interacts with PlsY.

The protein resides in the cytoplasm. It catalyses the reaction a fatty acyl-[ACP] + phosphate = an acyl phosphate + holo-[ACP]. The protein operates within lipid metabolism; phospholipid metabolism. Its function is as follows. Catalyzes the reversible formation of acyl-phosphate (acyl-PO(4)) from acyl-[acyl-carrier-protein] (acyl-ACP). This enzyme utilizes acyl-ACP as fatty acyl donor, but not acyl-CoA. The protein is Phosphate acyltransferase of Staphylococcus aureus (strain USA300).